Reading from the N-terminus, the 454-residue chain is Bifunctional protein GlmU (454 aa).

Residues 1–226 form a pyrophosphorylase region; it reads MSLNVVILAA…PIETEGANNR (226 aa). UDP-N-acetyl-alpha-D-glucosamine-binding positions include 8–11, Lys22, Gln73, 78–79, 100–102, Gly137, Glu151, Asn166, and Asn224; these read LAAG, GT, and YGD. A Mg(2+)-binding site is contributed by Asp102. Residue Asn224 coordinates Mg(2+). Residues 227-247 are linker; it reads VQLAALERAYQARRAEELMLA. The N-acetyltransferase stretch occupies residues 248-454; that stretch reads GANLRDPARI…GWQRPVKKPK (207 aa). Positions 330 and 348 each coordinate UDP-N-acetyl-alpha-D-glucosamine. The Proton acceptor role is filled by His360. 2 residues coordinate UDP-N-acetyl-alpha-D-glucosamine: Tyr363 and Asn374. Acetyl-CoA is bound by residues Ala377, 383–384, Ser402, Ala420, and Arg437; that span reads NY.

It in the N-terminal section; belongs to the N-acetylglucosamine-1-phosphate uridyltransferase family. In the C-terminal section; belongs to the transferase hexapeptide repeat family. As to quaternary structure, homotrimer. It depends on Mg(2+) as a cofactor.

Its subcellular location is the cytoplasm. It carries out the reaction alpha-D-glucosamine 1-phosphate + acetyl-CoA = N-acetyl-alpha-D-glucosamine 1-phosphate + CoA + H(+). It catalyses the reaction N-acetyl-alpha-D-glucosamine 1-phosphate + UTP + H(+) = UDP-N-acetyl-alpha-D-glucosamine + diphosphate. The protein operates within nucleotide-sugar biosynthesis; UDP-N-acetyl-alpha-D-glucosamine biosynthesis; N-acetyl-alpha-D-glucosamine 1-phosphate from alpha-D-glucosamine 6-phosphate (route II): step 2/2. It participates in nucleotide-sugar biosynthesis; UDP-N-acetyl-alpha-D-glucosamine biosynthesis; UDP-N-acetyl-alpha-D-glucosamine from N-acetyl-alpha-D-glucosamine 1-phosphate: step 1/1. Its pathway is bacterial outer membrane biogenesis; LPS lipid A biosynthesis. Catalyzes the last two sequential reactions in the de novo biosynthetic pathway for UDP-N-acetylglucosamine (UDP-GlcNAc). The C-terminal domain catalyzes the transfer of acetyl group from acetyl coenzyme A to glucosamine-1-phosphate (GlcN-1-P) to produce N-acetylglucosamine-1-phosphate (GlcNAc-1-P), which is converted into UDP-GlcNAc by the transfer of uridine 5-monophosphate (from uridine 5-triphosphate), a reaction catalyzed by the N-terminal domain. The protein is Bifunctional protein GlmU of Shewanella amazonensis (strain ATCC BAA-1098 / SB2B).